The primary structure comprises 1123 residues: Leucine-rich repeat receptor-like protein kinase PEPR1 (1123 aa).

Residues methionine 1–cysteine 28 form the signal peptide. The Extracellular segment spans residues leucine 29–glutamine 769. The LRR 1 repeat unit spans residues serine 31–threonine 53. N-linked (GlcNAc...) asparagine glycans are attached at residues asparagine 57, asparagine 81, asparagine 110, and asparagine 121. 7 LRR repeats span residues serine 74 to leucine 98, lysine 99 to cysteine 122, lysine 124 to serine 145, leucine 146 to isoleucine 170, proline 171 to alanine 194, glutamate 196 to serine 218, and serine 219 to glycine 243. Asparagine 182 and asparagine 217 each carry an N-linked (GlcNAc...) asparagine glycan. N-linked (GlcNAc...) asparagine glycosylation is found at asparagine 244, asparagine 252, asparagine 289, asparagine 302, asparagine 316, asparagine 321, and asparagine 337. LRR repeat units lie at residues leucine 245–cysteine 266, lysine 267–cysteine 290, serine 292–leucine 314, lysine 315–cysteine 338, serine 340–leucine 362, arginine 363–serine 386, serine 388–methionine 410, lysine 412–asparagine 434, serine 435–glycine 458, arginine 459–cysteine 482, threonine 484–aspartate 505, histidine 506–cysteine 529, lysine 530–leucine 553, glutamine 554–cysteine 577, serine 579–asparagine 600, tryptophan 601–leucine 625, lysine 626–glutamate 650, leucine 652–leucine 674, isoleucine 675–glycine 696, and leucine 697–glutamine 721. N-linked (GlcNAc...) asparagine glycosylation is found at asparagine 398, asparagine 420, and asparagine 434. Asparagine 494 is a glycosylation site (N-linked (GlcNAc...) asparagine). N-linked (GlcNAc...) asparagine glycosylation is found at asparagine 531, asparagine 536, asparagine 560, asparagine 591, and asparagine 597. Asparagine 681 and asparagine 686 each carry an N-linked (GlcNAc...) asparagine glycan. N-linked (GlcNAc...) asparagine glycosylation is present at asparagine 745. A helical transmembrane segment spans residues isoleucine 770 to phenylalanine 790. Over isoleucine 791 to arginine 1123 the chain is Cytoplasmic. Threonine 824 carries the phosphothreonine modification. The 289-residue stretch at leucine 827–arginine 1115 folds into the Protein kinase domain. ATP is bound by residues isoleucine 833–valine 841 and lysine 855. Phosphotyrosine occurs at positions 901 and 941. The active-site Proton acceptor is the aspartate 954. Tyrosine 995 carries the phosphotyrosine modification.

Belongs to the protein kinase superfamily. Ser/Thr protein kinase family. Interacts with PEP1 and BAK1. Interacts with BIK1 and PBL1. In terms of processing, N-glycosylated.

The protein localises to the cell membrane. It carries out the reaction L-seryl-[protein] + ATP = O-phospho-L-seryl-[protein] + ADP + H(+). It catalyses the reaction L-threonyl-[protein] + ATP = O-phospho-L-threonyl-[protein] + ADP + H(+). Functionally, acts as a receptor for PEP defense peptides. Unlike typical immune receptors, senses an endogenous elicitor that potentiates pathogen-associated molecular pattern (PAMP)-inducible plant responses. Involved in PAMP-triggered immunity (PTI) signaling. Interacts with and phosphorylates the kinase BIK1, a central rate-limiting kinase in PTI signaling. This chain is Leucine-rich repeat receptor-like protein kinase PEPR1 (PEPR1), found in Arabidopsis thaliana (Mouse-ear cress).